The chain runs to 384 residues: Alcohol dehydrogenase class-3 (384 aa).

Zn(2+) contacts are provided by Cys-48, His-70, Cys-100, Cys-103, Cys-106, Cys-114, and Cys-177.

The protein belongs to the zinc-containing alcohol dehydrogenase family. Class-III subfamily. As to quaternary structure, homodimer. Zn(2+) is required as a cofactor.

Its subcellular location is the cytoplasm. It carries out the reaction a primary alcohol + NAD(+) = an aldehyde + NADH + H(+). It catalyses the reaction a secondary alcohol + NAD(+) = a ketone + NADH + H(+). The catalysed reaction is S-(hydroxymethyl)glutathione + NADP(+) = S-formylglutathione + NADPH + H(+). The enzyme catalyses S-(hydroxymethyl)glutathione + NAD(+) = S-formylglutathione + NADH + H(+). In terms of biological role, class-III ADH is remarkably ineffective in oxidizing ethanol, but it readily catalyzes the oxidation of long-chain primary alcohols and the oxidation of S-(hydroxymethyl) glutathione. Plays a role in the calcium flux to the cytoplasm in the ASJ sensory neurons upon removal of a nitric oxide stimulus. The sequence is that of Alcohol dehydrogenase class-3 from Caenorhabditis elegans.